The chain runs to 236 residues: Small ribosomal subunit protein uS5 (236 aa).

Positions 1–10 are enriched in basic and acidic residues; sequence MTENNEKDIQ. The interval 1–64 is disordered; the sequence is MTENNEKDIQ…GRDGGREAEK (64 aa). Low complexity predominate over residues 11–27; sequence VTEAVAAPATETAAPAT. Over residues 28–64 the composition is skewed to basic and acidic residues; it reads TDDRRGGARRGERGDRGQGRGDRGGRGGRDGGREAEK. Positions 67–130 constitute an S5 DRBM domain; it reads FVERVVTINR…EEAKKSFFRV (64 aa).

Belongs to the universal ribosomal protein uS5 family. As to quaternary structure, part of the 30S ribosomal subunit. Contacts proteins S4 and S8.

In terms of biological role, with S4 and S12 plays an important role in translational accuracy. Its function is as follows. Located at the back of the 30S subunit body where it stabilizes the conformation of the head with respect to the body. The polypeptide is Small ribosomal subunit protein uS5 (Arthrobacter sp. (strain FB24)).